A 384-amino-acid chain; its full sequence is MKLTLKRKFIAVLALTSLLGACSLFKNERRFEPAKLADIKQSIVVNTVWQTSIGSGGSAGFAPVYADNSIFAATPDGTVVRVNAENGNIAWSTKLDTKLTSGVGVGDGLVIVTDRKAKAYALNAQTGEKVWDTELSTISTMPPIAGFGKVIVRADDFRVQAFDSKDGKLHWSFVRTNPILSLKTNSRMALINNAVIVAVPTGKLVSLNLNDGTVNWEIHSASAKGPSDIDSVTDVVGQPLVFNDGVCTSSYQGNITCYSIKNSRLTPVWFEPFSSAVGLGYDNNIIYGASIDGTVAAFSLANGQIAWSDQTLINRGLTNPVVYQNYLYVGDLDGLIHVYDTKSGSLVGRFSVGSSKDIVSPLLPTDKGVVVQNGSGTLMLIRAN.

Residues 1–21 (MKLTLKRKFIAVLALTSLLGA) form the signal peptide. A lipid anchor (N-palmitoyl cysteine) is attached at C22. C22 is lipidated: S-diacylglycerol cysteine.

Belongs to the BamB family. As to quaternary structure, part of the Bam complex.

Its subcellular location is the cell outer membrane. Its function is as follows. Part of the outer membrane protein assembly complex, which is involved in assembly and insertion of beta-barrel proteins into the outer membrane. In Taylorella asinigenitalis (strain MCE3), this protein is Outer membrane protein assembly factor BamB.